A 234-amino-acid polypeptide reads, in one-letter code: Biosynthetic peptidoglycan transglycosylase (234 aa).

Residues 8–28 (VIGCFAAGVVALNLYFFAAIA) form a helical membrane-spanning segment.

It belongs to the glycosyltransferase 51 family.

Its subcellular location is the cell inner membrane. The enzyme catalyses [GlcNAc-(1-&gt;4)-Mur2Ac(oyl-L-Ala-gamma-D-Glu-L-Lys-D-Ala-D-Ala)](n)-di-trans,octa-cis-undecaprenyl diphosphate + beta-D-GlcNAc-(1-&gt;4)-Mur2Ac(oyl-L-Ala-gamma-D-Glu-L-Lys-D-Ala-D-Ala)-di-trans,octa-cis-undecaprenyl diphosphate = [GlcNAc-(1-&gt;4)-Mur2Ac(oyl-L-Ala-gamma-D-Glu-L-Lys-D-Ala-D-Ala)](n+1)-di-trans,octa-cis-undecaprenyl diphosphate + di-trans,octa-cis-undecaprenyl diphosphate + H(+). It participates in cell wall biogenesis; peptidoglycan biosynthesis. In terms of biological role, peptidoglycan polymerase that catalyzes glycan chain elongation from lipid-linked precursors. This Ralstonia nicotianae (strain ATCC BAA-1114 / GMI1000) (Ralstonia solanacearum) protein is Biosynthetic peptidoglycan transglycosylase.